The sequence spans 926 residues: Sperm-associated antigen 1 (926 aa).

TPR repeat units follow at residues 209-242 (ATREKEKGNEAFNSGDYEEAVMYYTRSISALPTV), 244-275 (AYNNRAQAEIKLQNWNSAFQDCEKVLELEPGN), and 276-309 (VKALLRRATTYKHQNKLREATEDLSKVLDVEPDN). The interval 318-452 (EVERDLKNSE…ENPAGLKSQG (135 aa)) is disordered. Residues serine 347 and serine 354 each carry the phosphoserine modification. The segment covering 352–368 (GKSGRKHEDGGGDKKPA) has biased composition (basic and acidic residues). The span at 369–379 (EPAGAARAAQP) shows a compositional bias: low complexity. Residue serine 423 is modified to Phosphoserine. Residues 428–441 (AGGGATGHPGGGQG) are compositionally biased toward gly residues. TPR repeat units lie at residues 445 to 478 (PAGLKSQGNELFRSGQFAEAAGKYSAAIALLEPA), 487 to 520 (SILYSNRAACYLKEGNCSGCIQDCNRALELHPFS), 522 to 554 (KPLLRRAMAYETLEQYGKAYVDYKTVLQIDCGL), 623 to 656 (FKALKEEGNQCVNDKNYKDALSKYSECLKINNKE), 657 to 690 (CAIYTNRALCYLKLCQFEEAKQDCDQALQLADGN), and 692 to 724 (KAFYRRALAHKGLKNYQKSLIDLNKVILLDPSI). Composition is skewed to basic and acidic residues over residues 758–769 (IQEVNEGKEEPG) and 784–799 (KGGKSSRSPEDPEKLP). A disordered region spans residues 758–801 (IQEVNEGKEEPGRPAGEVSMGCLASEKGGKSSRSPEDPEKLPIA). Residue 781 to 788 (ASEKGGKS) coordinates GTP. At serine 791 the chain carries Phosphoserine.

In terms of tissue distribution, present in most tissues, including lung, with the strongest expression in brain, colon, kidney, and testis. In sperm and testis, detected in particular in pachytene primary spermatocytes. Up-regulated in pancreatic tumor tissues and not in normal pancreatic tissue.

It is found in the cytoplasm. The protein localises to the dynein axonemal particle. Its function is as follows. May play a role in the cytoplasmic assembly of the ciliary dynein arms. May play a role in fertilization. Binds GTP and has GTPase activity. This chain is Sperm-associated antigen 1 (SPAG1), found in Homo sapiens (Human).